A 98-amino-acid chain; its full sequence is NADH-ubiquinone oxidoreductase chain 4L (98 aa).

3 consecutive transmembrane segments (helical) span residues 1-21 (MSLI…GLLM), 29-49 (ALLC…LTIL), and 61-81 (IILL…LVMV).

It belongs to the complex I subunit 4L family. As to quaternary structure, core subunit of respiratory chain NADH dehydrogenase (Complex I) which is composed of 45 different subunits.

Its subcellular location is the mitochondrion inner membrane. It carries out the reaction a ubiquinone + NADH + 5 H(+)(in) = a ubiquinol + NAD(+) + 4 H(+)(out). In terms of biological role, core subunit of the mitochondrial membrane respiratory chain NADH dehydrogenase (Complex I) which catalyzes electron transfer from NADH through the respiratory chain, using ubiquinone as an electron acceptor. Part of the enzyme membrane arm which is embedded in the lipid bilayer and involved in proton translocation. This chain is NADH-ubiquinone oxidoreductase chain 4L (MT-ND4L), found in Phocoena phocoena (Harbor porpoise).